Consider the following 641-residue polypeptide: Protein BCAP (641 aa).

Coiled-coil stretches lie at residues 83–144 (HWPV…KQND), 191–270 (EKDN…RKLE), 299–375 (QKQK…EREQ), and 487–599 (FKLE…TLNA).

This sequence belongs to the ODF2 family.

It localises to the cytoplasm. Its subcellular location is the cytoskeleton. The protein localises to the microtubule organizing center. The protein resides in the centrosome. It is found in the centriole. It localises to the centriolar satellite. Its subcellular location is the cilium basal body. In terms of biological role, acts as a suppressor of ciliogenesis, specifically, the initiation of ciliogenesis. The protein is Protein BCAP (odf2l) of Xenopus laevis (African clawed frog).